We begin with the raw amino-acid sequence, 111 residues long: Dynein light chain Tctex-type (111 aa).

It belongs to the dynein light chain Tctex-type family.

The protein resides in the cytoplasm. Its subcellular location is the cytoskeleton. In terms of biological role, acts as a non-catalytic accessory component of a dynein complex. This chain is Dynein light chain Tctex-type (dlcA), found in Dictyostelium discoideum (Social amoeba).